A 512-amino-acid chain; its full sequence is Cytochrome P450 1A1 (512 aa).

The segment at 29-40 (SRPQVPKGLKNP) is mitochondrial targeting signal. Serine 67 is a glycosylation site (O-linked (GlcNAc) serine). Phenylalanine 224 serves as a coordination point for substrate. Cysteine 457 is a heme binding site.

This sequence belongs to the cytochrome P450 family. Interacts with cytosolic chaperones HSP70 and HSP90; this interaction is required for initial targeting to mitochondria. Interacts (via mitochondrial targeting signal) with TOMM40 (via N-terminus); this interaction is required for translocation across the mitochondrial outer membrane. Heme is required as a cofactor. As to expression, lung, lymphocytes and placenta.

It localises to the endoplasmic reticulum membrane. The protein localises to the mitochondrion inner membrane. The protein resides in the microsome membrane. Its subcellular location is the cytoplasm. It carries out the reaction an organic molecule + reduced [NADPH--hemoprotein reductase] + O2 = an alcohol + oxidized [NADPH--hemoprotein reductase] + H2O + H(+). The catalysed reaction is estrone + reduced [NADPH--hemoprotein reductase] + O2 = 2-hydroxyestrone + oxidized [NADPH--hemoprotein reductase] + H2O + H(+). The enzyme catalyses estrone + reduced [NADPH--hemoprotein reductase] + O2 = 4-hydroxyestrone + oxidized [NADPH--hemoprotein reductase] + H2O + H(+). It catalyses the reaction estrone + reduced [NADPH--hemoprotein reductase] + O2 = 6alpha-hydroxyestrone + oxidized [NADPH--hemoprotein reductase] + H2O + H(+). It carries out the reaction estrone + reduced [NADPH--hemoprotein reductase] + O2 = 15alpha-hydroxyestrone + oxidized [NADPH--hemoprotein reductase] + H2O + H(+). The catalysed reaction is estrone + reduced [NADPH--hemoprotein reductase] + O2 = 16alpha-hydroxyestrone + oxidized [NADPH--hemoprotein reductase] + H2O + H(+). The enzyme catalyses 17beta-estradiol + reduced [NADPH--hemoprotein reductase] + O2 = 2-hydroxy-17beta-estradiol + oxidized [NADPH--hemoprotein reductase] + H2O + H(+). It catalyses the reaction 17beta-estradiol + reduced [NADPH--hemoprotein reductase] + O2 = 4-hydroxy-17beta-estradiol + oxidized [NADPH--hemoprotein reductase] + H2O + H(+). It carries out the reaction 17beta-estradiol + reduced [NADPH--hemoprotein reductase] + O2 = 6alpha-hydroxy-17beta-estradiol + oxidized [NADPH--hemoprotein reductase] + H2O + H(+). The catalysed reaction is 17beta-estradiol + reduced [NADPH--hemoprotein reductase] + O2 = 7alpha-hydroxy-17beta-estradiol + oxidized [NADPH--hemoprotein reductase] + H2O + H(+). The enzyme catalyses 17beta-estradiol + reduced [NADPH--hemoprotein reductase] + O2 = 15alpha-hydroxy-17beta-estradiol + oxidized [NADPH--hemoprotein reductase] + H2O + H(+). It catalyses the reaction (5Z,8Z,11Z)-eicosatrienoate + reduced [NADPH--hemoprotein reductase] + O2 = 19-hydroxy-(5Z,8Z,11Z)-eicosatrienoate + oxidized [NADPH--hemoprotein reductase] + H2O + H(+). It carries out the reaction (5Z,8Z,11Z,14Z)-eicosatetraenoate + reduced [NADPH--hemoprotein reductase] + O2 = 16-hydroxy-(5Z,8Z,11Z,14Z)-eicosatetraenoate + oxidized [NADPH--hemoprotein reductase] + H2O + H(+). The catalysed reaction is (5Z,8Z,11Z,14Z)-eicosatetraenoate + reduced [NADPH--hemoprotein reductase] + O2 = 17-hydroxy-(5Z,8Z,11Z,14Z)-eicosatetraenoate + oxidized [NADPH--hemoprotein reductase] + H2O + H(+). The enzyme catalyses (5Z,8Z,11Z,14Z)-eicosatetraenoate + reduced [NADPH--hemoprotein reductase] + O2 = 18-hydroxy-(5Z,8Z,11Z,14Z)-eicosatetraenoate + oxidized [NADPH--hemoprotein reductase] + H2O + H(+). It catalyses the reaction (5Z,8Z,11Z,14Z)-eicosatetraenoate + reduced [NADPH--hemoprotein reductase] + O2 = 19-hydroxy-(5Z,8Z,11Z,14Z)-eicosatetraenoate + oxidized [NADPH--hemoprotein reductase] + H2O + H(+). It carries out the reaction (5Z,8Z,11Z,14Z,17Z)-eicosapentaenoate + reduced [NADPH--hemoprotein reductase] + O2 = 19-hydroxy-(5Z,8Z,11Z,14Z,17Z)-eicosapentaenoate + oxidized [NADPH--hemoprotein reductase] + H2O + H(+). The catalysed reaction is (5Z,8Z,11Z,14Z)-eicosatetraenoate + reduced [NADPH--hemoprotein reductase] + O2 = (8R,9S)-epoxy-(5Z,11Z,14Z)-eicosatrienoate + oxidized [NADPH--hemoprotein reductase] + H2O + H(+). The enzyme catalyses (5Z,8Z,11Z,14Z)-eicosatetraenoate + reduced [NADPH--hemoprotein reductase] + O2 = (11R,12S)-epoxy-(5Z,8Z,14Z)-eicosatrienoate + oxidized [NADPH--hemoprotein reductase] + H2O + H(+). It catalyses the reaction (5Z,8Z,11Z,14Z)-eicosatetraenoate + reduced [NADPH--hemoprotein reductase] + O2 = (14S,15R)-epoxy-(5Z,8Z,11Z)-eicosatrienoate + oxidized [NADPH--hemoprotein reductase] + H2O + H(+). It carries out the reaction (5Z,8Z,11Z,14Z)-eicosatetraenoate + reduced [NADPH--hemoprotein reductase] + O2 = (14R,15S)-epoxy-(5Z,8Z,11Z)-eicosatrienoate + oxidized [NADPH--hemoprotein reductase] + H2O + H(+). The catalysed reaction is (5Z,8Z,11Z,14Z,17Z)-eicosapentaenoate + reduced [NADPH--hemoprotein reductase] + O2 = (17R,18S)-epoxy-(5Z,8Z,11Z,14Z)-eicosatetraenoate + oxidized [NADPH--hemoprotein reductase] + H2O + H(+). The enzyme catalyses (4Z,7Z,10Z,13Z,16Z,19Z)-docosahexaenoate + reduced [NADPH--hemoprotein reductase] + O2 = (19S,20R)-epoxy-(4Z,7Z,10Z,13Z,16Z)-docosapentaenoate + oxidized [NADPH--hemoprotein reductase] + H2O + H(+). It catalyses the reaction (4Z,7Z,10Z,13Z,16Z,19Z)-docosahexaenoate + reduced [NADPH--hemoprotein reductase] + O2 = (19R,20S)-epoxy-(4Z,7Z,10Z,13Z,16Z)-docosapentaenoate + oxidized [NADPH--hemoprotein reductase] + H2O + H(+). It carries out the reaction all-trans-retinol + reduced [NADPH--hemoprotein reductase] + O2 = all-trans-retinal + oxidized [NADPH--hemoprotein reductase] + 2 H2O + H(+). The catalysed reaction is all-trans-retinal + reduced [NADPH--hemoprotein reductase] + O2 = all-trans-retinoate + oxidized [NADPH--hemoprotein reductase] + H2O + 2 H(+). The enzyme catalyses (13S)-hydroperoxy-(9Z,11E)-octadecadienoate = 13-oxo-(9Z,11E)-octadecadienoate + H2O. It catalyses the reaction (12S)-hydroperoxy-(5Z,8Z,10E,14Z)-eicosatetraenoate = 12-oxo-(5Z,8Z,10E,14Z)-eicosatetraenoate + H2O. It carries out the reaction (15S)-hydroperoxy-(5Z,8Z,11Z,13E)-eicosatetraenoate = 15-oxo-(5Z,8Z,11Z,13E)-eicosatetraenoate + H2O. The catalysed reaction is (5S)-hydroperoxy-(6E,8Z,11Z,14Z)-eicosatetraenoate = 5-oxo-(6E,8Z,11Z,14Z)-eicosatetraenoate + H2O. It participates in steroid hormone biosynthesis. The protein operates within lipid metabolism; fatty acid metabolism. Its pathway is cofactor metabolism; retinol metabolism. A cytochrome P450 monooxygenase involved in the metabolism of various endogenous substrates, including fatty acids, steroid hormones and vitamins. Mechanistically, uses molecular oxygen inserting one oxygen atom into a substrate, and reducing the second into a water molecule, with two electrons provided by NADPH via cytochrome P450 reductase (NADPH--hemoprotein reductase). Catalyzes the hydroxylation of carbon-hydrogen bonds. Exhibits high catalytic activity for the formation of hydroxyestrogens from estrone (E1) and 17beta-estradiol (E2), namely 2-hydroxy E1 and E2, as well as D-ring hydroxylated E1 and E2 at the C15-alpha and C16-alpha positions. Displays different regioselectivities for polyunsaturated fatty acids (PUFA) hydroxylation. Catalyzes the epoxidation of double bonds of certain PUFA. Converts arachidonic acid toward epoxyeicosatrienoic acid (EET) regioisomers, 8,9-, 11,12-, and 14,15-EET, that function as lipid mediators in the vascular system. Displays an absolute stereoselectivity in the epoxidation of eicosapentaenoic acid (EPA) producing the 17(R),18(S) enantiomer. May play an important role in all-trans retinoic acid biosynthesis in extrahepatic tissues. Catalyzes two successive oxidative transformation of all-trans retinol to all-trans retinal and then to the active form all-trans retinoic acid. May also participate in eicosanoids metabolism by converting hydroperoxide species into oxo metabolites (lipoxygenase-like reaction, NADPH-independent). The protein is Cytochrome P450 1A1 of Homo sapiens (Human).